The sequence spans 434 residues: Enolase (434 aa).

Residue Gln165 participates in (2R)-2-phosphoglycerate binding. The active-site Proton donor is Glu207. Asp244, Glu291, and Asp318 together coordinate Mg(2+). Residues Lys343, Arg372, Ser373, and Lys394 each contribute to the (2R)-2-phosphoglycerate site. Catalysis depends on Lys343, which acts as the Proton acceptor.

Belongs to the enolase family. Requires Mg(2+) as cofactor.

The protein resides in the cytoplasm. The protein localises to the secreted. It is found in the cell surface. The enzyme catalyses (2R)-2-phosphoglycerate = phosphoenolpyruvate + H2O. Its pathway is carbohydrate degradation; glycolysis; pyruvate from D-glyceraldehyde 3-phosphate: step 4/5. In terms of biological role, catalyzes the reversible conversion of 2-phosphoglycerate (2-PG) into phosphoenolpyruvate (PEP). It is essential for the degradation of carbohydrates via glycolysis. The chain is Enolase from Staphylococcus saprophyticus subsp. saprophyticus (strain ATCC 15305 / DSM 20229 / NCIMB 8711 / NCTC 7292 / S-41).